The chain runs to 117 residues: Large ribosomal subunit protein uL22 (117 aa).

This sequence belongs to the universal ribosomal protein uL22 family. Part of the 50S ribosomal subunit.

Its function is as follows. This protein binds specifically to 23S rRNA; its binding is stimulated by other ribosomal proteins, e.g. L4, L17, and L20. It is important during the early stages of 50S assembly. It makes multiple contacts with different domains of the 23S rRNA in the assembled 50S subunit and ribosome. In terms of biological role, the globular domain of the protein is located near the polypeptide exit tunnel on the outside of the subunit, while an extended beta-hairpin is found that lines the wall of the exit tunnel in the center of the 70S ribosome. In Lactobacillus delbrueckii subsp. bulgaricus (strain ATCC 11842 / DSM 20081 / BCRC 10696 / JCM 1002 / NBRC 13953 / NCIMB 11778 / NCTC 12712 / WDCM 00102 / Lb 14), this protein is Large ribosomal subunit protein uL22.